The chain runs to 41 residues: Large ribosomal subunit protein bL36 (41 aa).

This sequence belongs to the bacterial ribosomal protein bL36 family.

This chain is Large ribosomal subunit protein bL36, found in Bartonella tribocorum (strain CIP 105476 / IBS 506).